Consider the following 342-residue polypeptide: Succinylglutamate desuccinylase (342 aa).

Zn(2+) is bound by residues H63, E66, and H155. E219 is an active-site residue.

This sequence belongs to the AspA/AstE family. Succinylglutamate desuccinylase subfamily. Zn(2+) is required as a cofactor.

The catalysed reaction is N-succinyl-L-glutamate + H2O = L-glutamate + succinate. Its pathway is amino-acid degradation; L-arginine degradation via AST pathway; L-glutamate and succinate from L-arginine: step 5/5. Functionally, transforms N(2)-succinylglutamate into succinate and glutamate. The protein is Succinylglutamate desuccinylase of Vibrio vulnificus (strain CMCP6).